We begin with the raw amino-acid sequence, 320 residues long: Lipoyl synthase (320 aa).

[4Fe-4S] cluster is bound by residues C67, C72, C78, C93, C97, C100, and S307. The Radical SAM core domain occupies 79-296 (FNHGTATFMI…RDKAQAMGFE (218 aa)).

This sequence belongs to the radical SAM superfamily. Lipoyl synthase family. It depends on [4Fe-4S] cluster as a cofactor.

The protein resides in the cytoplasm. It carries out the reaction [[Fe-S] cluster scaffold protein carrying a second [4Fe-4S](2+) cluster] + N(6)-octanoyl-L-lysyl-[protein] + 2 oxidized [2Fe-2S]-[ferredoxin] + 2 S-adenosyl-L-methionine + 4 H(+) = [[Fe-S] cluster scaffold protein] + N(6)-[(R)-dihydrolipoyl]-L-lysyl-[protein] + 4 Fe(3+) + 2 hydrogen sulfide + 2 5'-deoxyadenosine + 2 L-methionine + 2 reduced [2Fe-2S]-[ferredoxin]. It participates in protein modification; protein lipoylation via endogenous pathway; protein N(6)-(lipoyl)lysine from octanoyl-[acyl-carrier-protein]: step 2/2. Catalyzes the radical-mediated insertion of two sulfur atoms into the C-6 and C-8 positions of the octanoyl moiety bound to the lipoyl domains of lipoate-dependent enzymes, thereby converting the octanoylated domains into lipoylated derivatives. This chain is Lipoyl synthase, found in Pasteurella multocida (strain Pm70).